A 156-amino-acid chain; its full sequence is Small ribosomal subunit protein uS7 (156 aa).

Belongs to the universal ribosomal protein uS7 family. As to quaternary structure, part of the 30S ribosomal subunit. Contacts proteins S9 and S11.

Its function is as follows. One of the primary rRNA binding proteins, it binds directly to 16S rRNA where it nucleates assembly of the head domain of the 30S subunit. Is located at the subunit interface close to the decoding center, probably blocks exit of the E-site tRNA. The polypeptide is Small ribosomal subunit protein uS7 (Alcanivorax borkumensis (strain ATCC 700651 / DSM 11573 / NCIMB 13689 / SK2)).